The chain runs to 78 residues: Large ribosomal subunit protein bL28 (78 aa).

This sequence belongs to the bacterial ribosomal protein bL28 family.

This is Large ribosomal subunit protein bL28 (rpmB) from Treponema pallidum (strain Nichols).